Here is a 219-residue protein sequence, read N- to C-terminus: Protein-L-isoaspartate O-methyltransferase (219 aa).

Ser-67 is an active-site residue.

This sequence belongs to the methyltransferase superfamily. L-isoaspartyl/D-aspartyl protein methyltransferase family.

The protein localises to the cytoplasm. The enzyme catalyses [protein]-L-isoaspartate + S-adenosyl-L-methionine = [protein]-L-isoaspartate alpha-methyl ester + S-adenosyl-L-homocysteine. In terms of biological role, catalyzes the methyl esterification of L-isoaspartyl residues in peptides and proteins that result from spontaneous decomposition of normal L-aspartyl and L-asparaginyl residues. It plays a role in the repair and/or degradation of damaged proteins. The sequence is that of Protein-L-isoaspartate O-methyltransferase from Cereibacter sphaeroides (strain ATCC 17029 / ATH 2.4.9) (Rhodobacter sphaeroides).